We begin with the raw amino-acid sequence, 688 residues long: NADH-ubiquinone oxidoreductase 75 kDa subunit (688 aa).

Positions 1–85 (MLIRFKINEI…DESIETEIDE (85 aa)) constitute a 2Fe-2S ferredoxin-type domain. C38, C49, C52, and C66 together coordinate [2Fe-2S] cluster. The 4Fe-4S His(Cys)3-ligated-type domain occupies 85–124 (EILKAREGVMEFLLINHPLDCPICDQGGECDLQEQTIAYG). Residues H101, C105, C108, C114, C153, C156, C159, and C204 each coordinate [4Fe-4S] cluster. A 4Fe-4S Mo/W bis-MGD-type domain is found at 223–279 (LKNIKGIDIFDTVLTPINYQVKGGEIFRILPRINDRLNEEWITDKVRFHYESYKIIE).

Belongs to the complex I 75 kDa subunit family. As to quaternary structure, complex I is composed of about 45 different subunits. [2Fe-2S] cluster is required as a cofactor. Requires [4Fe-4S] cluster as cofactor.

Its subcellular location is the mitochondrion inner membrane. The enzyme catalyses a ubiquinone + NADH + 5 H(+)(in) = a ubiquinol + NAD(+) + 4 H(+)(out). Its function is as follows. Core subunit of the mitochondrial membrane respiratory chain NADH dehydrogenase (Complex I) that is believed to belong to the minimal assembly required for catalysis. Complex I functions in the transfer of electrons from NADH to the respiratory chain. The immediate electron acceptor for the enzyme is believed to be ubiquinone. This is the largest subunit of complex I and it is a component of the iron-sulfur (IP) fragment of the enzyme. It may form part of the active site crevice where NADH is oxidized. The chain is NADH-ubiquinone oxidoreductase 75 kDa subunit (nad11) from Dictyostelium citrinum (Slime mold).